The sequence spans 85 residues: Large ribosomal subunit protein bL27 (85 aa).

The interval 1–21 is disordered; sequence MAHKKGGGSTHNGRDSKPKML.

It belongs to the bacterial ribosomal protein bL27 family.

This chain is Large ribosomal subunit protein bL27, found in Albidiferax ferrireducens (strain ATCC BAA-621 / DSM 15236 / T118) (Rhodoferax ferrireducens).